Consider the following 217-residue polypeptide: Ras-related protein Rab11B (217 aa).

Residue G21–S28 participates in GTP binding. The Effector region motif lies at S43–F51. Residues D69–Q73 and N127–D130 contribute to the GTP site. S-geranylgeranyl cysteine attachment occurs at residues C214 and C215.

It belongs to the small GTPase superfamily. Rab family.

Its subcellular location is the cell membrane. In Nicotiana tabacum (Common tobacco), this protein is Ras-related protein Rab11B (RAB11B).